A 71-amino-acid polypeptide reads, in one-letter code: Prokaryotic ubiquitin-like protein Pup (71 aa).

Over residues 1-18 (MATRDSGGQSQTGRSQQG) the composition is skewed to low complexity. A disordered region spans residues 1–42 (MATRDSGGQSQTGRSQQGEEIEDVTTEASAEAAERHAEITED). Positions 27–65 (EASAEAAERHAEITEDVDDLLDEIDSVLEENAEEFVRGY) are ARC ATPase binding. A coiled-coil region spans residues 29–60 (SAEAAERHAEITEDVDDLLDEIDSVLEENAEE). Residue E71 forms an Isoglutamyl lysine isopeptide (Glu-Lys) (interchain with K-? in acceptor proteins) linkage.

The protein belongs to the prokaryotic ubiquitin-like protein family. In terms of assembly, strongly interacts with the proteasome-associated ATPase ARC through a hydrophobic interface; the interacting region of Pup lies in its C-terminal half. There is one Pup binding site per ARC hexamer ring.

It participates in protein degradation; proteasomal Pup-dependent pathway. Protein modifier that is covalently attached to lysine residues of substrate proteins, thereby targeting them for proteasomal degradation. The tagging system is termed pupylation. The chain is Prokaryotic ubiquitin-like protein Pup from Salinispora tropica (strain ATCC BAA-916 / DSM 44818 / JCM 13857 / NBRC 105044 / CNB-440).